The chain runs to 598 residues: IQ calmodulin-binding motif-containing protein 1 (598 aa).

Residues 1-157 (MKPTGTDPRI…SLFWLLGGHV (157 aa)) form an interaction with BBS1, BBS8 and BBS9 region. Residues 287–598 (QEVEEQKLHQ…NLFIGGTKPP (312 aa)) form an interaction with CEP290, BBS1, BBS2, BBS4, BBS5, BBS7, BBS8 and BBS9 region. 4 IQ domains span residues 294–317 (LHQA…LKKL), 318–338 (PSAV…MLLE), 387–416 (EEKS…SLIE), and 417–437 (YKAA…CRKK). A coiled-coil region spans residues 336–373 (LLEINRQKEEEDLKLQLQLQRQRAMRLSRELQLSMLEI). Residues 530–598 (AEGKEPELFL…NLFIGGTKPP (69 aa)) are interaction with BBS1, BBS2, BBS4, BBS7, BBS8 and BBS9. Position 572 is a phosphoserine (serine 572).

Interacts with CEP290/NPHP6; IQCB1/NPHP5 and CEP290 are proposed to form a functional NPHP5-6 module/NPHP6; localized to the centrosome. Interacts with calmodulin, ATXN10. Interacts with NPHP1, INVS, NPHP4 and RPGRIP1L; these interactions likely require additional interactors. Associates with the BBSome complex; interacts with BBS1, BBS2, BBS4, BBS5, BBS7, BBS8 and BBS9. In terms of tissue distribution, ubiquitously expressed in fetal and adult tissues. Localized to the outer segments and connecting cilia of photoreceptor cells. Up-regulated in a number of primary colorectal and gastric tumors.

The protein localises to the cytoplasm. It localises to the cytoskeleton. The protein resides in the microtubule organizing center. It is found in the centrosome. Its subcellular location is the centriole. In terms of biological role, involved in ciliogenesis. The function in an early step in cilia formation depends on its association with CEP290/NPHP6. Involved in regulation of the BBSome complex integrity, specifically for presence of BBS2 and BBS5 in the complex, and in ciliary targeting of selected BBSome cargos. May play a role in controlling entry of the BBSome complex to cilia possibly implicating CEP290/NPHP6. The protein is IQ calmodulin-binding motif-containing protein 1 (IQCB1) of Homo sapiens (Human).